Reading from the N-terminus, the 158-residue chain is 2-C-methyl-D-erythritol 2,4-cyclodiphosphate synthase (158 aa).

A divalent metal cation is bound by residues Asp9 and His11. 4-CDP-2-C-methyl-D-erythritol 2-phosphate is bound by residues 9 to 11 (DVH) and 35 to 36 (HS). Position 43 (His43) interacts with a divalent metal cation. 4-CDP-2-C-methyl-D-erythritol 2-phosphate contacts are provided by residues 57 to 59 (DIG), 62 to 66 (FPDTD), 101 to 107 (AQKPKML), 133 to 136 (TTTE), Phe140, and Arg143.

It belongs to the IspF family. As to quaternary structure, homotrimer. A divalent metal cation serves as cofactor.

It carries out the reaction 4-CDP-2-C-methyl-D-erythritol 2-phosphate = 2-C-methyl-D-erythritol 2,4-cyclic diphosphate + CMP. Its pathway is isoprenoid biosynthesis; isopentenyl diphosphate biosynthesis via DXP pathway; isopentenyl diphosphate from 1-deoxy-D-xylulose 5-phosphate: step 4/6. Its function is as follows. Involved in the biosynthesis of isopentenyl diphosphate (IPP) and dimethylallyl diphosphate (DMAPP), two major building blocks of isoprenoid compounds. Catalyzes the conversion of 4-diphosphocytidyl-2-C-methyl-D-erythritol 2-phosphate (CDP-ME2P) to 2-C-methyl-D-erythritol 2,4-cyclodiphosphate (ME-CPP) with a corresponding release of cytidine 5-monophosphate (CMP). In Bacillus subtilis (strain 168), this protein is 2-C-methyl-D-erythritol 2,4-cyclodiphosphate synthase.